The following is a 270-amino-acid chain: ParA family protein MPN_688 (270 aa).

This sequence belongs to the ParA family.

The polypeptide is ParA family protein MPN_688 (Mycoplasma pneumoniae (strain ATCC 29342 / M129 / Subtype 1) (Mycoplasmoides pneumoniae)).